Here is a 215-residue protein sequence, read N- to C-terminus: UPF0502 protein YceH (215 aa).

It belongs to the UPF0502 family.

The sequence is that of UPF0502 protein YceH from Salmonella paratyphi B (strain ATCC BAA-1250 / SPB7).